A 961-amino-acid chain; its full sequence is DNA replication licensing factor MCM2 (961 aa).

Residues 1 to 17 show a composition bias toward polar residues; it reads MDDSENNAPSTPGSPGF. Disordered stretches follow at residues 1 to 81 and 120 to 220; these read MDDS…FNDN and AEAE…EEDE. Over residues 39-78 the composition is skewed to acidic residues; that stretch reads SDDDDDDVVGAEEAEVDPNVLPEDDGVVAAEEEEDGEDLF. 2 stretches are compositionally biased toward basic and acidic residues: residues 120–146 and 166–176; these read AEAE…LHDQ and PPREPRTPRSD. The span at 205–220 shows a compositional bias: acidic residues; that stretch reads QTDDDPYEDEFDEEDE. The C4-type zinc-finger motif lies at 380–406; the sequence is CSKCGTVLGPFFQNSYTEVKVGSCPEC. Residues 524 to 730 enclose the MCM domain; that stretch reads IGERIVKSIA…FTDEMLARFV (207 aa). Position 574 to 581 (574 to 581) interacts with ATP; it reads GDPGTAKS. An Arginine finger motif is present at residues 706–709; sequence SRFD.

It belongs to the MCM family. As to quaternary structure, component of the minichromosome maintenance (MCM) complex, a heterotetramer composed of MCM2, MCM3, MCM4, MCM5, MCM6 and MCM7.

The protein localises to the nucleus. It catalyses the reaction ATP + H2O = ADP + phosphate + H(+). Probable component of the MCM2-7 complex (MCM complex) that may function as a DNA helicase and which is essential to undergo a single round of replication initiation and elongation per cell cycle in eukaryotic cells. The protein is DNA replication licensing factor MCM2 of Oryza sativa subsp. indica (Rice).